Here is a 91-residue protein sequence, read N- to C-terminus: Auxin-responsive protein SAUR20 (91 aa).

It belongs to the ARG7 family.

The protein localises to the cell membrane. In terms of biological role, functions as a positive effector of cell expansion through modulation of auxin transport. This Arabidopsis thaliana (Mouse-ear cress) protein is Auxin-responsive protein SAUR20.